The following is a 152-amino-acid chain: D-aminoacyl-tRNA deacylase (152 aa).

Residues 138-139 (GP) carry the Gly-cisPro motif, important for rejection of L-amino acids motif.

The protein belongs to the DTD family. In terms of assembly, homodimer.

Its subcellular location is the cytoplasm. It catalyses the reaction glycyl-tRNA(Ala) + H2O = tRNA(Ala) + glycine + H(+). It carries out the reaction a D-aminoacyl-tRNA + H2O = a tRNA + a D-alpha-amino acid + H(+). Its function is as follows. An aminoacyl-tRNA editing enzyme that deacylates mischarged D-aminoacyl-tRNAs. Also deacylates mischarged glycyl-tRNA(Ala), protecting cells against glycine mischarging by AlaRS. Acts via tRNA-based rather than protein-based catalysis; rejects L-amino acids rather than detecting D-amino acids in the active site. By recycling D-aminoacyl-tRNA to D-amino acids and free tRNA molecules, this enzyme counteracts the toxicity associated with the formation of D-aminoacyl-tRNA entities in vivo and helps enforce protein L-homochirality. This is D-aminoacyl-tRNA deacylase from Chloroherpeton thalassium (strain ATCC 35110 / GB-78).